The sequence spans 349 residues: Phosphoribosylformylglycinamidine cyclo-ligase (349 aa).

The protein belongs to the AIR synthase family.

It localises to the cytoplasm. The enzyme catalyses 2-formamido-N(1)-(5-O-phospho-beta-D-ribosyl)acetamidine + ATP = 5-amino-1-(5-phospho-beta-D-ribosyl)imidazole + ADP + phosphate + H(+). Its pathway is purine metabolism; IMP biosynthesis via de novo pathway; 5-amino-1-(5-phospho-D-ribosyl)imidazole from N(2)-formyl-N(1)-(5-phospho-D-ribosyl)glycinamide: step 2/2. The protein is Phosphoribosylformylglycinamidine cyclo-ligase of Listeria monocytogenes serotype 4a (strain HCC23).